The sequence spans 342 residues: Deoxyguanosinetriphosphate triphosphohydrolase-like protein (342 aa).

The 116-residue stretch at 75–190 folds into the HD domain; it reads RLVHTLEVSQ…VRFADKIAYV (116 aa).

It belongs to the dGTPase family. Type 2 subfamily.

The protein is Deoxyguanosinetriphosphate triphosphohydrolase-like protein of Clostridium perfringens (strain 13 / Type A).